Reading from the N-terminus, the 108-residue chain is MAKQLIQSEEEFKRIAEQEGVFVFLKHSTTCPISQAAFHEFDAFANQHEDVPAYYLQVQEARPLSNFIAETYGVKHESPQIFIIQNGEVKWHTSHSQITEAAIEQHLS.

C31 is modified (S-bacillithiol cysteine disulfide).

Interacts with AbrB, BdhA, Bdr, BrxB, FolD, GapA, GapB, GatA, PfkA, PyrAA, PyrAB, PyrE, PyrG, PyrH, RpsB, RpsK, RpsL, SalA, SucC, Tuf and YtsJ. Post-translationally, cys can react with bacillithiol (BSH) to form mixed disulfides. S-bacillithiolation protects Cys residues against overoxidation by acting as a redox switch in response to oxidative stress.

S-bacillithiolation is the formation of mixed disulfide bonds between protein thiols and the general thiol reductant bacillithiol (BSH) under oxidative stress. BSH is an equivalent of glutathione (GSH) in Firmicutes. This protein is a monothiol bacilliredoxin, which debacillithiolates (removes BSH) the S-bacillithiolated glyceraldehyde-3-phosphate dehydrogenases (GAPDHs) GapA and GapB in vivo and probably a number of other oxidized cytosolic proteins. Debacillithiolates the S-bacillithiolated Bdr (Bdr-SSB) and BrxB (BrxB-SSB) in vitro. Involved in maintaining redox homeostasis in response to disulfide stress conditions. This Bacillus subtilis (strain 168) protein is Monothiol bacilliredoxin BrxC.